The chain runs to 457 residues: Paired box protein Pax-8 (457 aa).

Residues 9–135 constitute a DNA-binding region (paired); it reads GHGGLNQLGG…SSINRIIRTK (127 aa). The tract at residues 12–68 is PAI subdomain; that stretch reads GLNQLGGAFVNGRPLPEVVRQRIVDLAHQGVRPCDISRQLRVSHGCVSKILGRYYET. The interval 87–135 is RED subdomain; it reads KVVEKIGDYKRQNPTMFAWEIRDRLLAEGVCDNDTVPSVSSINRIIRTK. The segment covering 159–182 has biased composition (polar residues); sequence LIPSSAVTPPESPQSDSLGSTYSI. Positions 159–224 are disordered; it reads LIPSSAVTPP…SSSSGPRKHL (66 aa). Position 304 is a phosphoserine (serine 304).

Interacts with WWTR1. Expressed in the developing excretory system and the thyroid gland.

The protein resides in the nucleus. Its function is as follows. Thought to encode a transcription factor. It may have a role in kidney cell differentiation. May play a regulatory role in mammalian development. The chain is Paired box protein Pax-8 (Pax8) from Mus musculus (Mouse).